The sequence spans 305 residues: MSKKLTFQEIILTLQQFWNDQGCMLMQAYDNEKGAGTMSPYTFLRAIGPEPWNAAYVEPSRRPADGRYGENPNRLYQHHQFQVVMKPSPSNIQELYLESLEKLGINPLEHDIRFVEDNWENPSTGSAGLGWEVWLDGMEITQFTYFQQVGGLATGPVTAEVTYGLERLASYIQEVDSVYDIEWADGVKYGEIFIQPEYEHSKYSFEISDQEMLLENFDKFEKEAGRALEEGLVHPAYDYVLKCSHTFNLLDARGAVSVTERAGYIARIRNLARVVAKTFVAERKRLGYPLLDEETRVKLLAEDAE.

The protein belongs to the class-II aminoacyl-tRNA synthetase family. Tetramer of two alpha and two beta subunits.

The protein localises to the cytoplasm. It catalyses the reaction tRNA(Gly) + glycine + ATP = glycyl-tRNA(Gly) + AMP + diphosphate. In Streptococcus pneumoniae (strain 70585), this protein is Glycine--tRNA ligase alpha subunit.